The primary structure comprises 335 residues: Proline racemase (335 aa).

Cysteine 91 serves as the catalytic Proton acceptor. Cysteine 256 (proton donor) is an active-site residue.

This sequence belongs to the proline racemase family.

It carries out the reaction L-proline = D-proline. With respect to regulation, inhibited by pyrrole-2-carboxylate in vitro. Functionally, catalyzes the reversible interconversion of L- and D-proline. Likely functions as the proline racemase necessary for D-proline generation in order to discriminate it from the L-proline used for protein synthesis. The sequence is that of Proline racemase from Acetoanaerobium sticklandii (strain ATCC 12662 / DSM 519 / JCM 1433 / CCUG 9281 / NCIMB 10654 / HF) (Clostridium sticklandii).